Consider the following 153-residue polypeptide: Transcriptional regulator MraZ (153 aa).

SpoVT-AbrB domains lie at 7–61 (KEKH…LPDV) and 90–133 (LEMV…EPGR).

This sequence belongs to the MraZ family. As to quaternary structure, forms oligomers.

Its subcellular location is the cytoplasm. The protein localises to the nucleoid. The polypeptide is Transcriptional regulator MraZ (Chlorobium luteolum (strain DSM 273 / BCRC 81028 / 2530) (Pelodictyon luteolum)).